The sequence spans 74 residues: Protein kish-B (74 aa).

The first 22 residues, 1-22 (MTNVYSFDGILVFGLLFICTCA), serve as a signal peptide directing secretion. At 23-52 (YLKKVPRLNSWLLSEKKGVWGVFYKAAVIG) the chain is on the extracellular side. A helical transmembrane segment spans residues 53-73 (TRLHVVVAASCLCMAFYLIFL). A topological domain (cytoplasmic) is located at residue Lys-74.

It belongs to the KISH family.

The protein localises to the golgi apparatus membrane. Functionally, involved in the early part of the secretory pathway. The sequence is that of Protein kish-B (tmem167b) from Danio rerio (Zebrafish).